A 580-amino-acid chain; its full sequence is Double-stranded RNA-binding protein Staufen homolog 1 (580 aa).

An N-acetylserine modification is found at Ser2. The span at 34–44 (SIPSTTSSLPS) shows a compositional bias: polar residues. The interval 34-59 (SIPSTTSSLPSENAGRPIQNSALPSA) is disordered. The 91-residue stretch at 72 to 162 (TPTVELNALC…AAKALRTLQS (91 aa)) folds into the DRBM 1 domain. Arg108 is modified (asymmetric dimethylarginine). Arg115 carries the post-translational modification Asymmetric dimethylarginine; alternate. At Arg115 the chain carries Omega-N-methylarginine; alternate. Residues 158–189 (RTLQSEPLPERPEGRRPGEQVNGRESEEENLN) are disordered. Residues 165-182 (LPERPEGRRPGEQVNGRE) show a composition bias toward basic and acidic residues. Ser183 carries the phosphoserine modification. One can recognise a DRBM 2 domain in the interval 191 to 258 (SEISQVFEIA…AIAVLEELKK (68 aa)). Ser285 bears the Phosphoserine mark. Positions 293 to 361 (NPISRLAQIQ…AENMLEILGF (69 aa)) constitute a DRBM 3 domain. Residues 367-404 (QPTKPALKSEEKTPIKKPGDGRKVTFFEPGSGDENGTS) are disordered. Positions 373 to 391 (LKSEEKTPIKKPGDGRKVT) are enriched in basic and acidic residues. The residue at position 397 (Ser397) is a Phosphoserine.

In terms of assembly, binds tubulin. Binds with low affinity single-stranded RNA or DNA homopolymers. Interacts with CASC3 in an RNA-dependent manner. Identified in a mRNP complex, at least composed of DHX9, DDX3X, ELAVL1, HNRNPU, IGF2BP1, ILF3, PABPC1, PCBP2, PTBP2, STAU1, STAU2, SYNCRIP and YBX1. Interacts with the influenza virus nonstructural protein NS1.

It is found in the cytoplasm. The protein resides in the rough endoplasmic reticulum. Its function is as follows. Binds double-stranded RNA (regardless of the sequence) and tubulin. May play a role in specific positioning of mRNAs at given sites in the cell by cross-linking cytoskeletal and RNA components, and in stimulating their translation at the site. The chain is Double-stranded RNA-binding protein Staufen homolog 1 (STAU1) from Ailuropoda melanoleuca (Giant panda).